Reading from the N-terminus, the 1553-residue chain is Mediator of RNA polymerase II transcription subunit 14 (1553 aa).

2 short sequence motifs (LXXLL motif) span residues 55-59 and 472-476; these read LAELL and LPALL. S615 carries the phosphoserine modification. 3 disordered regions span residues 699–723, 1006–1199, and 1513–1553; these read FATQ…GTSG, ASHE…LNRP, and GVGS…GGPQ. S1015 is subject to Phosphoserine. Composition is skewed to low complexity over residues 1024-1039 and 1065-1080; these read GGPS…GSSP and PSSS…HPSA. The segment covering 1081–1090 has biased composition (gly residues); that stretch reads GAGGGSGPQG. Pro residues predominate over residues 1099–1108; that stretch reads PPAPHMPHPS. A compositionally biased stretch (polar residues) spans 1131-1155; the sequence is GPNTLYMQSHQDSPFTAMSPANNNW. Pro residues predominate over residues 1159–1169; sequence PSMPRPSPRPG. Over residues 1177–1193 the composition is skewed to gly residues; sequence TGGGAGVAGGTDRGGSR. Positions 1515–1534 are enriched in low complexity; that stretch reads GSSPNPMMPMQQLPQQVGPQ.

Belongs to the Mediator complex subunit 14 family. In terms of assembly, component of the Mediator complex, which may include CDK8, MED4, MED6, MED11, MED14, MED17, MED18, MED20, MED21, MED22, MED27, MED28, MED30 and MED31.

The protein resides in the nucleus. Component of the Mediator complex, a coactivator involved in the regulated transcription of nearly all RNA polymerase II-dependent genes. Mediator functions as a bridge to convey information from gene-specific regulatory proteins to the basal RNA polymerase II transcription machinery. Mediator is recruited to promoters by direct interactions with regulatory proteins and serves as a scaffold for the assembly of a functional pre-initiation complex with RNA polymerase II and the general transcription factors. Required for activated transcription of the MtnA, MtnB and MtnD genes. This is Mediator of RNA polymerase II transcription subunit 14 (MED14) from Drosophila melanogaster (Fruit fly).